The primary structure comprises 508 residues: Photosystem II CP47 reaction center protein (508 aa).

6 helical membrane-spanning segments follow: residues 21-36 (AVHI…WAGS), 101-115 (IVFS…IWHW), 140-156 (GIHL…FGAF), 203-218 (IAAG…FHLS), 237-252 (VLSS…AFVV), and 457-472 (SFAL…HGAR).

It belongs to the PsbB/PsbC family. PsbB subfamily. PSII is composed of 1 copy each of membrane proteins PsbA, PsbB, PsbC, PsbD, PsbE, PsbF, PsbH, PsbI, PsbJ, PsbK, PsbL, PsbM, PsbT, PsbX, PsbY, PsbZ, Psb30/Ycf12, at least 3 peripheral proteins of the oxygen-evolving complex and a large number of cofactors. It forms dimeric complexes. Binds multiple chlorophylls. PSII binds additional chlorophylls, carotenoids and specific lipids. serves as cofactor.

Its subcellular location is the plastid. The protein resides in the chloroplast thylakoid membrane. Functionally, one of the components of the core complex of photosystem II (PSII). It binds chlorophyll and helps catalyze the primary light-induced photochemical processes of PSII. PSII is a light-driven water:plastoquinone oxidoreductase, using light energy to abstract electrons from H(2)O, generating O(2) and a proton gradient subsequently used for ATP formation. This chain is Photosystem II CP47 reaction center protein, found in Nandina domestica (Heavenly bamboo).